The chain runs to 406 residues: MVHCAGCKRPILDRFLLNVLDRAWHVKCVQCCECKCNLTEKCFSREGKLYCKNDFFRCFGTKCAGCAQGISPSDLVRRARSKVFHLNCFTCMMCNKQLSTGEELYIIDENKFVCKEDYLNNSNTAKENSLHSATTGSDPSLSPDSQDPSQDDAKDSESANVSDKETGSNENDDQNLGAKRRGPRTTIKAKQLETLKAAFAATPKPTRHIREQLAQETGLNMRVIQVWFQNRRSKERRMKQLSALGARRHAFFRSPRRMRPLVDRLEPGELLPNGPFSFYGDYQSEYYGPGANYEFFPQGPPSSQAQTPVELPFGAAGGPPGTPLGALEHPLPGHHPPGEAQRFPDMLAHPAGDSPSPEPTLPGSLHSMSAEVFGPSPPFSSISVNGGANYGNHLSHPPEMNEAAVW.

2 LIM zinc-binding domains span residues 4-54 (CAGC…CKND) and 63-117 (CAGC…CKED). Residues 125–136 (AKENSLHSATTG) are compositionally biased toward polar residues. 2 disordered regions span residues 125–187 (AKEN…RTTI) and 296–372 (FPQG…SAEV). Positions 137–148 (SDPSLSPDSQDP) are enriched in low complexity. A compositionally biased stretch (basic and acidic residues) spans 151-167 (DDAKDSESANVSDKETG). A DNA-binding region (homeobox) is located at residues 180 to 239 (RRGPRTTIKAKQLETLKAAFAATPKPTRHIREQLAQETGLNMRVIQVWFQNRRSKERRMK).

Its subcellular location is the nucleus. Its function is as follows. Transcriptional factor that defines subclasses of motoneurons that segregate into columns in the spinal cord and select distinct axon pathways. Acts in conjunction with ISL-2. The sequence is that of LIM/homeobox protein Lhx1 (LHX1) from Gallus gallus (Chicken).